The following is a 274-amino-acid chain: MKNTVIALLALLASAGSLAATPWQKITQPIGGSAQSIGAFSNGCIVGAEALPLSAPGYQVMRTDQRRYFGHPDLVQFIQRLSNQVHNKGMGTVLIGDMGMPAGGRFNGGHASHQTGLDVDIFLQLPQTRWTSSQLLKPQALDLVASDGKHVVPSLWSPQISQLIKLAAEDSEVTRIFVNPAIKQQLCLDAGSDRQWLRKVRPWFQHRAHMHVRLRCPAGSLECEDQAPPPPGDGCGAELQSWFEPPKPGSTPPVKKTPPPLPPSCQALLDEHVL.

The signal sequence occupies residues 1-19 (MKNTVIALLALLASAGSLA). 3 disulfides stabilise this stretch: C44–C265, C187–C235, and C216–C223. Zn(2+) contacts are provided by H110, H113, D120, D147, H150, and H211. The tract at residues 224–263 (EDQAPPPPGDGCGAELQSWFEPPKPGSTPPVKKTPPPLPP) is disordered. Pro residues predominate over residues 245–263 (PPKPGSTPPVKKTPPPLPP).

It belongs to the peptidase M74 family. In terms of assembly, dimer. The cofactor is Zn(2+).

The protein localises to the periplasm. Murein endopeptidase that cleaves the D-alanyl-meso-2,6-diamino-pimelyl amide bond that connects peptidoglycan strands. Likely plays a role in the removal of murein from the sacculus. This chain is Penicillin-insensitive murein endopeptidase, found in Klebsiella pneumoniae subsp. pneumoniae (strain ATCC 700721 / MGH 78578).